Reading from the N-terminus, the 422-residue chain is Steroid hormone receptor ERR1 (422 aa).

The segment at 1-67 (MSSQVVGIEP…GAGPGEQGGG (67 aa)) is disordered. Phosphoserine occurs at positions 19 and 22. Residues 58-67 (GAGPGEQGGG) are compositionally biased toward gly residues. Positions 76 to 151 (KRLCLVCGDV…VGMLKEGVRL (76 aa)) form a DNA-binding region, nuclear receptor. 2 NR C4-type zinc fingers span residues 79-99 (CLVCGDVASGYHYGVASCEAC) and 115-134 (CPASNECEITKRRRKACQAC). Lys129, Lys138, Lys160, and Lys162 each carry N6-acetyllysine; by PCAF/KAT2B. Residues Lys189 and Lys402 each participate in a glycyl lysine isopeptide (Lys-Gly) (interchain with G-Cter in SUMO2) cross-link. Residues 192–420 (PVNALVSHLL…KLFLEMLEAM (229 aa)) enclose the NR LBD domain.

The protein belongs to the nuclear hormone receptor family. NR3 subfamily. Binds DNA as a monomer or a homodimer. Interacts (via the AF2 domain) with coactivator PPARGC1A (via the L3 motif); the interaction greatly enhances transcriptional activity of genes involved in energy metabolism. Interacts with PIAS4; the interaction enhances sumoylation. Interacts with MAPK15; promotes re-localization of ESRRA to the cytoplasm through a XPO1-dependent mechanism then inhibits ESRRA transcriptional activity. In terms of processing, phosphorylation on Ser-19 enhances sumoylation on Lys-14 increasing repression of transcriptional activity. Post-translationally, sumoylated with SUMO2. Main site is Lys-14 which is enhanced by phosphorylation on Ser-19, cofactor activation, and by interaction with PIAS4. Sumoylation enhances repression of transcriptional activity, but has no effect on subcellular location nor on DNA binding. Reversibly acetylated. Acetylation by PCAF/KAT2 at Lys-129, Lys-138, Lys-160 and Lys-162 and PCAF/KAT2 decreases transcriptional activity probably by inhibiting DNA-binding activity; deacetylation involves SIRT1 and HDAC8 and increases DNA-binding.

It localises to the nucleus. The protein resides in the cytoplasm. Its function is as follows. Binds to an ERR-alpha response element (ERRE) containing a single consensus half-site, 5'-TNAAGGTCA-3'. Can bind to the medium-chain acyl coenzyme A dehydrogenase (MCAD) response element NRRE-1 and may act as an important regulator of MCAD promoter. May function as a modulator of the estrogen signaling pathway in the uterus. Induces the expression of PERM1 in the skeletal muscle. The polypeptide is Steroid hormone receptor ERR1 (ESRRA) (Canis lupus familiaris (Dog)).